The chain runs to 337 residues: MVRPTRNRKPINYSQFEDSGNDSDDDFISSSTPVNKSKTVPKVLKQDKPKPNLKNLQKEEVLPTEPPKKRVALDDKVFQRGLEVALALSVKELPTLTNQVKKSKEKSTDKQGKEKTENTGKPPRVSNCSVASDDVEDLDKITEEGDASSVEGERKSPSQAKAPRRRAPSEGSDGSSANDTESESATGEGSESDPDFDESKESDEDFGVRRSKESKKKTVQKKPAGEKKERKSKPKCEASVTSVDPAPAAIKSGSPSLPQAVGLPSEATRKPAIMCSPSAESKRPKWVPPAASGSRNSSSNALAGTPAKSPSQSLRLGLSRLAPVKRLHPSATSSQVR.

2 disordered regions span residues 1–69 (MVRP…PPKK) and 88–337 (LSVK…SQVR). A phosphoserine mark is found at Ser19 and Ser23. Residues 28–38 (ISSSTPVNKSK) are compositionally biased toward polar residues. The segment at 32–50 (TPVNKSKTVPKVLKQDKPK) is interaction with DNA. Positions 44–69 (LKQDKPKPNLKNLQKEEVLPTEPPKK) are enriched in basic and acidic residues. Residues Ser103 and Ser107 each carry the phosphoserine modification. Residues 105 to 118 (EKSTDKQGKEKTEN) are compositionally biased toward basic and acidic residues. The SIM motif signature appears at 138–143 (LDKITE). Positions 190–205 (SESDPDFDESKESDED) are enriched in acidic residues. An interaction with DNA region spans residues 225–286 (GEKKERKSKP…PSAESKRPKW (62 aa)). Lys251 is covalently cross-linked (Glycyl lysine isopeptide (Lys-Gly) (interchain with G-Cter in SUMO; alternate)). Residue Lys251 forms a Glycyl lysine isopeptide (Lys-Gly) (interchain with G-Cter in ubiquitin; alternate) linkage. A WVPP motif motif is present at residues 286-289 (WVPP). Residues 290 to 304 (AASGSRNSSSNALAG) show a composition bias toward low complexity. Residues 295–334 (RNSSSNALAGTPAKSPSQSLRLGLSRLAPVKRLHPSATSS) form an interaction with RAD51 region. Phosphoserine is present on Ser309.

In terms of assembly, monomer; elongated monodisperse monomer. Interacts (via C-terminal region) with RAD51; the interaction is direct. Interacts (via SIM motif) with WDR48/UAF1; WDR48/UAF1 and RAD51AP1 cooperate together to stimulate RAD51-mediated homologous recombination (HR). Interacts (via WVPP motif) with DMC1; the interaction is direct. Interacts with PALB2. Interacts with RAD52. Post-translationally, sumoylation with SUMO2/3 by NSMCE2/MMS21 promotes stabilization, possibly by preventing ubiquitination. In terms of tissue distribution, most abundantly expressed in testis. Also expressed in spleen, thymus and bone marrow. Not detected in heart, kidney or liver.

It is found in the chromosome. The protein resides in the nucleus. Its subcellular location is the telomere. Structure-specific DNA-binding protein involved in DNA repair by promoting RAD51-mediated homologous recombination. Acts by stimulating D-Loop formation by RAD51: specifically enhances joint molecule formation through its structure-specific DNA interaction and its interaction with RAD51. Binds single-stranded DNA (ssDNA), double-stranded DNA (dsDNA) and secondary DNA structures, such as D-loop structures: has a strong preference for branched-DNA structures that are obligatory intermediates during joint molecule formation. Cooperates with WDR48/UAF1 to stimulate RAD51-mediated homologous recombination: both WDR48/UAF1 and RAD51AP1 have coordinated role in DNA-binding during homologous recombination and DNA repair. WDR48/UAF1 and RAD51AP1 also have a coordinated role in DNA-binding to promote USP1-mediated deubiquitination of FANCD2. Also involved in meiosis by promoting DMC1-mediated homologous meiotic recombination. The polypeptide is RAD51-associated protein 1 (Mus musculus (Mouse)).